The sequence spans 190 residues: Small ribosomal subunit protein eS7B (190 aa).

The residue at position 2 (Ser-2) is an N-acetylserine. Phosphoserine occurs at positions 10 and 31. Glycyl lysine isopeptide (Lys-Gly) (interchain with G-Cter in ubiquitin) cross-links involve residues Lys-83 and Lys-84.

Belongs to the eukaryotic ribosomal protein eS7 family. In terms of assembly, component of the small ribosomal subunit (SSU). Mature yeast ribosomes consist of a small (40S) and a large (60S) subunit. The 40S small subunit contains 1 molecule of ribosomal RNA (18S rRNA) and 33 different proteins (encoded by 57 genes). The large 60S subunit contains 3 rRNA molecules (25S, 5.8S and 5S rRNA) and 46 different proteins (encoded by 81 genes). Interacts with snoRNA U3. uS11 interacts with MPP10. Component of the ribosomal small subunit (SSU) processome composed of at least 40 protein subunits and snoRNA U3. N-terminally acetylated by acetyltransferase NatA. In terms of processing, ubiquitinated at Lys-83 and Lys-84 in response to stalled ribosomes, leading to activation of the No-Go Decay (NGD) pathway: first monoubiquitinated by MOT2/NOT4, followed by formation by HEL2 of 'Lys-63'-linked polyubiquitin chains on monoubiquitin.

It is found in the cytoplasm. The protein localises to the nucleus. The protein resides in the nucleolus. In terms of biological role, component of the ribosome, a large ribonucleoprotein complex responsible for the synthesis of proteins in the cell. The small ribosomal subunit (SSU) binds messenger RNAs (mRNAs) and translates the encoded message by selecting cognate aminoacyl-transfer RNA (tRNA) molecules. The large subunit (LSU) contains the ribosomal catalytic site termed the peptidyl transferase center (PTC), which catalyzes the formation of peptide bonds, thereby polymerizing the amino acids delivered by tRNAs into a polypeptide chain. The nascent polypeptides leave the ribosome through a tunnel in the LSU and interact with protein factors that function in enzymatic processing, targeting, and the membrane insertion of nascent chains at the exit of the ribosomal tunnel. eS7 is involved in nucleolar processing of pre-18S ribosomal RNA and ribosome assembly. This chain is Small ribosomal subunit protein eS7B, found in Saccharomyces cerevisiae (strain ATCC 204508 / S288c) (Baker's yeast).